The chain runs to 54 residues: Ovomucoid (54 aa).

Residues 4–54 (VDCSDYPKPACSLDYMPLCGSDSKTYSNKCNFCNAVVDSNGTLTLSHFEKC) form the Kazal-like domain. 3 cysteine pairs are disulfide-bonded: Cys6/Cys36, Cys14/Cys33, and Cys22/Cys54. N-linked (GlcNAc...) asparagine glycosylation is present at Asn43.

The protein localises to the secreted. This Chroicocephalus ridibundus (Black-headed gull) protein is Ovomucoid.